Here is a 251-residue protein sequence, read N- to C-terminus: Cytochrome P450 monooxygenase ppzG (251 aa).

Residue C250 coordinates heme.

This sequence belongs to the cytochrome P450 family. It depends on heme as a cofactor.

It participates in secondary metabolite biosynthesis. Its function is as follows. Cytochrome P450 monooxygenase; part of the gene cluster that mediates the biosynthesis of pyrrolopyrazines, secondary metabolites showing insecticidal activity. The role of ppzG within the pathway has still to be determined. The single multifunctional NRPS ppzA is sufficient to produce peramine via condensation of 1-pyrroline-5-carboxylate and arginine, N-methylation of the alpha-amino group of arginine and reduction of the thioester and the cyclization to form an iminium ion resulting in release from the peptide synthetase. Deprotonation of this intermediate and oxidation of the pyrroline ring would give rise to peramine. In Epichloe species that produce only peramine, the peramine synthetase gene is not localized in a gene cluster, in contrast to Metarhizium species that contain additional pyrrolopyrazine biosynthesis genes. The 2-oxoglutarate-Fe(II) type oxidoreductase ppzC hydroxylates peramine to yield the newly identified compound 8-hydroxyperamine whereas ppzD converts L-proline into trans-4-hydroxy-L-proline, a precursor of peramine biosynthesis. This is Cytochrome P450 monooxygenase ppzG from Metarhizium rileyi (strain RCEF 4871) (Nomuraea rileyi).